Reading from the N-terminus, the 71-residue chain is uncharacterized protein (71 aa).

A helical transmembrane segment spans residues 12 to 32 (FLVSIAFFGLAPTIPLLAIAL).

Its subcellular location is the membrane. This is an uncharacterized protein from Sinorhizobium fredii (strain NBRC 101917 / NGR234).